A 426-amino-acid chain; its full sequence is Alpha-ionylideneethane synthase abl3 (426 aa).

Belongs to the alpha-ionylideneethane synthase family.

The protein operates within hormone biosynthesis. Alpha-ionylideneethane synthase; part of the gene cluster that mediates the biosynthesis of abscisic acid (ABA), a phytohormone that acts antagonistically toward salicylic acid (SA), jasmonic acid (JA) and ethylene (ETH) signaling, to impede plant defense responses. The first step of the pathway catalyzes the reaction from farnesyl diphosphate to alpha-ionylideneethane performed by the alpha-ionylideneethane synthase abl3 via a three-step reaction mechanism involving 2 neutral intermediates, beta-farnesene and allofarnesene. The cytochrome P450 monooxygenase abl1 might then be involved in the conversion of alpha-ionylideneethane to alpha-ionylideneacetic acid. Alpha-ionylideneacetic acid is further converted to abscisic acid in 2 steps involving the cytochrome P450 monooxygenase abl2 and the short-chain dehydrogenase/reductase abl4, via the intermediates 1'-deoxy-ABA or 1',4'-trans-diol-ABA, depending on the order of action of these 2 enzymes. Abl2 is responsible for the hydroxylation of carbon atom C-1' and abl4 might be involved in the oxidation of the C-4' carbon atom. The sequence is that of Alpha-ionylideneethane synthase abl3 from Leptosphaeria maculans (strain JN3 / isolate v23.1.3 / race Av1-4-5-6-7-8) (Blackleg fungus).